A 563-amino-acid chain; its full sequence is Putative inactive polypeptide N-acetylgalactosaminyltransferase 12 (563 aa).

The Cytoplasmic portion of the chain corresponds to 1-6 (MEVFAS). A helical; Signal-anchor for type II membrane protein transmembrane segment spans residues 7–29 (VLNCCFKYIVLPVWIFIVLLLLH). Over 30–563 (RDLSSWDGLM…SVMQSANILV (534 aa)) the chain is Lumenal. Asparagine 50 carries N-linked (GlcNAc...) asparagine glycosylation. Cysteine 97 and cysteine 334 are disulfide-bonded. Positions 109-225 (MKPASIIMIF…NGWLSPLLDT (117 aa)) are catalytic subdomain A. Positions 280–342 (PYEVAAVRTS…PCSRVGHLQP (63 aa)) are catalytic subdomain B. 2 N-linked (GlcNAc...) asparagine glycosylation sites follow: asparagine 389 and asparagine 428. One can recognise a Ricin B-type lectin domain in the interval 433 to 549 (ASGHVKTLEF…ANGKQRWILD (117 aa)). A disulfide bridge links cysteine 446 with cysteine 461. N-linked (GlcNAc...) asparagine glycosylation is found at asparagine 464 and asparagine 469. Cystine bridges form between cysteine 485-cysteine 499 and cysteine 523-cysteine 537. Residue asparagine 552 is glycosylated (N-linked (GlcNAc...) asparagine).

The protein belongs to the glycosyltransferase 2 family. GalNAc-T subfamily.

It localises to the golgi apparatus membrane. In terms of biological role, probable inactive glycosyltransferase. This is Putative inactive polypeptide N-acetylgalactosaminyltransferase 12 (pgant12) from Drosophila melanogaster (Fruit fly).